Reading from the N-terminus, the 221-residue chain is GTP-binding nuclear protein Ran-2 (221 aa).

One can recognise a Small GTPase Ran-type domain in the interval 10-174 (DYPSFKLVIV…LYLARKLAGD (165 aa)). 21-28 (DGGTGKTT) contributes to the GTP binding site. The segment at 40–48 (KKYEPTIGV) is switch-I. GTP-binding positions include glycine 71, 125–128 (NKVD), and 153–155 (SAK). A switch-II region spans residues 71–87 (GQEKFGGLRDGYYIHGQ). A compositionally biased stretch (low complexity) spans 202-212 (ADLAAAAAQPL). Residues 202 to 221 (ADLAAAAAQPLPDDDDDAFE) form a disordered region.

The protein belongs to the small GTPase superfamily. Ran family. As to quaternary structure, found in a nuclear export complex with RanGTP, exportin and pre-miRNA. Interacts with RanBP1a and RanBP1b. Interacts with PHRIP1. Interacts with KPNB1. Binds to PHIP1.

It localises to the nucleus. It is found in the nucleus envelope. Its function is as follows. GTP-binding protein involved in nucleocytoplasmic transport. Required for the import of protein into the nucleus and also for RNA export. Involved in chromatin condensation and control of cell cycle. In Arabidopsis thaliana (Mouse-ear cress), this protein is GTP-binding nuclear protein Ran-2.